The sequence spans 204 residues: Proteasome subunit beta 2 (204 aa).

Positions 1–6 (MEVLPG) are cleaved as a propeptide — removed in mature form; by autocatalysis. Residue Thr-7 is the Nucleophile of the active site.

Belongs to the peptidase T1B family. The 20S proteasome core is composed of 14 alpha and 14 beta subunits that assemble into four stacked heptameric rings, resulting in a barrel-shaped structure. The two inner rings, each composed of seven catalytic beta subunits, are sandwiched by two outer rings, each composed of seven alpha subunits. The catalytic chamber with the active sites is on the inside of the barrel. Has a gated structure, the ends of the cylinder being occluded by the N-termini of the alpha-subunits. Is capped at one or both ends by the proteasome regulatory ATPase, PAN.

Its subcellular location is the cytoplasm. It carries out the reaction Cleavage of peptide bonds with very broad specificity.. The formation of the proteasomal ATPase PAN-20S proteasome complex, via the docking of the C-termini of PAN into the intersubunit pockets in the alpha-rings, triggers opening of the gate for substrate entry. Interconversion between the open-gate and close-gate conformations leads to a dynamic regulation of the 20S proteasome proteolysis activity. In terms of biological role, component of the proteasome core, a large protease complex with broad specificity involved in protein degradation. This is Proteasome subunit beta 2 from Thermofilum pendens (strain DSM 2475 / Hrk 5).